The following is a 423-amino-acid chain: Polyglutamylase complex subunit TTLL1 (423 aa).

The 367-residue stretch at 1–367 (MAGKVKWVTD…NGEIPDCKWN (367 aa)) folds into the TTL domain. ATP is bound by residues K138, 144 to 145 (QG), 181 to 184 (SLYI), and 194 to 196 (KFD). Q144 contacts a protein. An L-glutamate-binding site is contributed by R220. ATP is bound at residue 241 to 242 (TN). K259 lines the L-glutamate pocket. The Mg(2+) site is built by D313, E326, and N328. K344 provides a ligand contact to L-glutamate. The tract at residues 391 to 423 (GADRELRSRQGQSLGPRAGRSRDSGRAVLTTWK) is disordered.

It belongs to the tubulin polyglutamylase family. Part of the neuronal tubulin polyglutamylase complex which contains TPGS1, TPGS2, TTLL1, LRRC49 and NICN1. Interacts with PCM1, CSTPP1 and LRRC49. It depends on Mg(2+) as a cofactor. In terms of tissue distribution, expressed in a wide range of tissues. Has a stronger expression in heart, brain and testis.

Its subcellular location is the cytoplasm. It localises to the cytoskeleton. The protein localises to the cilium basal body. It is found in the cilium axoneme. The protein resides in the cell projection. Its subcellular location is the cilium. It localises to the flagellum. The catalysed reaction is (L-glutamyl)(n)-gamma-L-glutamyl-L-glutamyl-[protein] + L-glutamate + ATP = (L-glutamyl)(n+1)-gamma-L-glutamyl-L-glutamyl-[protein] + ADP + phosphate + H(+). Functionally, catalytic subunit of a polyglutamylase complex which modifies tubulin, generating side chains of glutamate on the gamma-carboxyl group of specific glutamate residues within the C-terminal tail of tubulin. Probably involved in the side-chain elongation step of the polyglutamylation reaction rather than the initiation step. Modifies both alpha- and beta-tubulins with a preference for the alpha-tail. Unlike most polyglutamylases of the tubulin--tyrosine ligase family, only displays a catalytic activity when in complex with other proteins as it is most likely lacking domains important for autonomous activity. Part of the neuronal tubulin polyglutamylase complex. Mediates cilia and flagella polyglutamylation which is essential for their biogenesis and motility. Involved in respiratory motile cilia function through the regulation of beating asymmetry. Essential for sperm flagella biogenesis, motility and male fertility. Involved in KLF4 glutamylation which impedes its ubiquitination, thereby leading to somatic cell reprogramming, pluripotency maintenance and embryogenesis. The protein is Polyglutamylase complex subunit TTLL1 of Homo sapiens (Human).